A 1633-amino-acid polypeptide reads, in one-letter code: Laminin-like protein lam-2 (1633 aa).

The signal sequence occupies residues 1–19; that stretch reads MTSILWLFSLAVLWHMGQP. The Laminin N-terminal domain maps to 47–286; that stretch reads QPQRCVPDFV…AISDFAVGGR (240 aa). N-linked (GlcNAc...) asparagine glycosylation is found at N116 and N136. Disulfide bonds link C287-C296, C289-C310, C312-C321, C324-C344, C347-C356, C349-C372, C375-C384, C387-C400, C403-C415, C405-C421, C423-C432, C435-C447, C450-C464, C452-C471, C473-C482, and C485-C500. Laminin EGF-like domains are found at residues 287–346, 347–402, 403–449, and 450–502; these read CKCN…ECIA, CNCS…YCVA, CGCN…GCKN, and CGCE…GCTP. N-linked (GlcNAc...) asparagine glycosylation is present at N348. The Laminin EGF-like 5; first part domain maps to 503 to 512; it reads CFCFGHSSIC. Residues N522, N658, and N740 are each glycosylated (N-linked (GlcNAc...) asparagine). The Laminin IV type A domain occupies 529-701; sequence QDKQKWAGQN…NPKQATWIEH (173 aa). The 46-residue stretch at 702-747 folds into the Laminin EGF-like 5; second part domain; it reads CECLPGFVGQFCESCESGFRRETKFGGPFNHCIKCDCHNHSNSCEA. Disulfide bonds link C736-C745, C738-C752, C754-C763, C766-C782, C785-C803, C806-C815, C818-C832, C835-C849, C837-C856, C859-C868, C871-C887, C890-C909, C892-C916, C918-C927, C930-C943, C946-C958, C948-C965, C967-C976, C979-C991, C994-C1006, C996-C1013, C1015-C1024, and C1027-C1038. A Laminin EGF-like 6; truncated domain is found at 752-784; sequence CICEHNTAGDTCERCARGYYGDALQGTEEDCQK. Laminin EGF-like domains are found at residues 785-834, 835-889, 890-945, 946-993, and 994-1040; these read CPCP…ECVE, CACS…NCQS, CGCF…GCQE, CNCD…GCQP, and CDCE…GCLP. Residue N936 is glycosylated (N-linked (GlcNAc...) asparagine). 7 N-linked (GlcNAc...) asparagine glycosylation sites follow: N1077, N1183, N1226, N1259, N1336, N1452, and N1528.

Functionally, during the formation of neuromuscular junctions at the larval stage, negatively regulates membrane protrusion from body wall muscles, probably downstream of the integrin complex formed by pat-2 and pat-3. The chain is Laminin-like protein lam-2 (lam-2) from Caenorhabditis elegans.